The following is a 576-amino-acid chain: Sulfite reductase [NADPH] hemoprotein beta-component (576 aa).

Positions 435, 441, 480, and 484 each coordinate [4Fe-4S] cluster. Cys-484 is a siroheme binding site.

Belongs to the nitrite and sulfite reductase 4Fe-4S domain family. In terms of assembly, alpha(8)-beta(8). The alpha component is a flavoprotein, the beta component is a hemoprotein. Requires siroheme as cofactor. It depends on [4Fe-4S] cluster as a cofactor.

It carries out the reaction hydrogen sulfide + 3 NADP(+) + 3 H2O = sulfite + 3 NADPH + 4 H(+). It participates in sulfur metabolism; hydrogen sulfide biosynthesis; hydrogen sulfide from sulfite (NADPH route): step 1/1. Functionally, component of the sulfite reductase complex that catalyzes the 6-electron reduction of sulfite to sulfide. This is one of several activities required for the biosynthesis of L-cysteine from sulfate. The protein is Sulfite reductase [NADPH] hemoprotein beta-component of Photorhabdus laumondii subsp. laumondii (strain DSM 15139 / CIP 105565 / TT01) (Photorhabdus luminescens subsp. laumondii).